The primary structure comprises 152 residues: Transcriptional regulator MraZ (152 aa).

2 SpoVT-AbrB domains span residues 5-52 (ASAI…PIHE) and 81-124 (AHEC…DEAA).

Belongs to the MraZ family. Forms oligomers.

Its subcellular location is the cytoplasm. The protein resides in the nucleoid. The protein is Transcriptional regulator MraZ of Shewanella pealeana (strain ATCC 700345 / ANG-SQ1).